Consider the following 423-residue polypeptide: Growth hormone-releasing hormone receptor (423 aa).

The signal sequence occupies residues 1 to 22 (MDGLMWATRILCLLSLCGVTLG). The Extracellular segment spans residues 23–130 (HLHLECDFIT…KEKSYFSTVK (108 aa)). 3 disulfide bridges follow: Cys41–Cys64, Cys55–Cys96, and Cys78–Cys112. N-linked (GlcNAc...) asparagine glycans are attached at residues Asn49 and Asn50. A helical transmembrane segment spans residues 131–151 (IIYTTGHSISIVALCVAIAIL). Topologically, residues 152–167 (VALRRLHCPRNYIHTQ) are cytoplasmic. The chain crosses the membrane as a helical span at residues 168–188 (LFATFILKASAVFLKDAAIFQ). The Extracellular portion of the chain corresponds to 189-210 (GDSTDHCSMSTVLCKVSVAISH). The helical transmembrane segment at 211–231 (LATMTNFSWLLAEAVYLSCLL) threads the bilayer. Residues 232 to 240 (ASTSPRSKP) are Cytoplasmic-facing. The chain crosses the membrane as a helical span at residues 241–261 (AFWWLVLAGWGLPVLCTGTWV). The Extracellular portion of the chain corresponds to 262–283 (GCKLAFEDTECWDLDNSSPCWW). A helical membrane pass occupies residues 284-304 (IIKGPIVLSVGVNFGLFLNII). The Cytoplasmic segment spans residues 305-331 (CILLRKLEPAQGGLHTRAQYWRLSKST). The helical transmembrane segment at 332–352 (LLLIPLFGIHYIIFNFLPDSA) threads the bilayer. The Extracellular portion of the chain corresponds to 353–357 (GLDIR). The chain crosses the membrane as a helical span at residues 358–378 (VPLELGLGSFQGFIVAVLYCF). The Cytoplasmic portion of the chain corresponds to 379–423 (LNQEVRTEISRKWYGHDPELLPARRTCTEWTTPPRSRLKVLTSEC).

Belongs to the G-protein coupled receptor 2 family. In terms of tissue distribution, pituitary gland.

It localises to the cell membrane. Receptor for GRF, coupled to G proteins which activate adenylyl cyclase. Stimulates somatotroph cell growth, growth hormone gene transcription and growth hormone secretion. In Mus musculus (Mouse), this protein is Growth hormone-releasing hormone receptor (Ghrhr).